Here is a 311-residue protein sequence, read N- to C-terminus: Probable manganese-dependent inorganic pyrophosphatase (311 aa).

Residues H9, D13, D15, D77, H99, and D151 each contribute to the Mn(2+) site.

The protein belongs to the PPase class C family. It depends on Mn(2+) as a cofactor.

It localises to the cytoplasm. It carries out the reaction diphosphate + H2O = 2 phosphate + H(+). The protein is Probable manganese-dependent inorganic pyrophosphatase of Streptococcus agalactiae serotype Ia (strain ATCC 27591 / A909 / CDC SS700).